A 342-amino-acid polypeptide reads, in one-letter code: Ribosomal RNA small subunit methyltransferase C (342 aa).

This sequence belongs to the methyltransferase superfamily. RsmC family. Monomer.

It localises to the cytoplasm. It catalyses the reaction guanosine(1207) in 16S rRNA + S-adenosyl-L-methionine = N(2)-methylguanosine(1207) in 16S rRNA + S-adenosyl-L-homocysteine + H(+). Specifically methylates the guanine in position 1207 of 16S rRNA in the 30S particle. The polypeptide is Ribosomal RNA small subunit methyltransferase C (Salmonella paratyphi B (strain ATCC BAA-1250 / SPB7)).